We begin with the raw amino-acid sequence, 381 residues long: tRNA-cytidine(32) 2-sulfurtransferase (381 aa).

The PP-loop motif signature appears at 101–106 (SGGKDS). [4Fe-4S] cluster contacts are provided by C176, C179, and C267.

This sequence belongs to the TtcA family. As to quaternary structure, homodimer. The cofactor is Mg(2+). It depends on [4Fe-4S] cluster as a cofactor.

It localises to the cytoplasm. It carries out the reaction cytidine(32) in tRNA + S-sulfanyl-L-cysteinyl-[cysteine desulfurase] + AH2 + ATP = 2-thiocytidine(32) in tRNA + L-cysteinyl-[cysteine desulfurase] + A + AMP + diphosphate + H(+). It functions in the pathway tRNA modification. Catalyzes the ATP-dependent 2-thiolation of cytidine in position 32 of tRNA, to form 2-thiocytidine (s(2)C32). The sulfur atoms are provided by the cysteine/cysteine desulfurase (IscS) system. In Psychrobacter cryohalolentis (strain ATCC BAA-1226 / DSM 17306 / VKM B-2378 / K5), this protein is tRNA-cytidine(32) 2-sulfurtransferase.